The sequence spans 99 residues: Integration host factor subunit alpha (99 aa).

The disordered stretch occupies residues 49–75 (FGNFDLRDKNQRPGRNPKTGEDIPITA).

This sequence belongs to the bacterial histone-like protein family. Heterodimer of an alpha and a beta chain.

This protein is one of the two subunits of integration host factor, a specific DNA-binding protein that functions in genetic recombination as well as in transcriptional and translational control. This chain is Integration host factor subunit alpha, found in Klebsiella pneumoniae (strain 342).